Reading from the N-terminus, the 355-residue chain is Arginine kinase (355 aa).

Residues 8–90 enclose the Phosphagen kinase N-terminal domain; that stretch reads KLQAGFKKLE…FDPIIEDYHV (83 aa). 63 to 67 is a binding site for L-arginine; it reads GVGIY. The region spanning 118–355 is the Phosphagen kinase C-terminal domain; sequence YVISTRVRCG…LQLIKMEKEM (238 aa). ATP is bound by residues 121 to 125 and His184; that span reads STRVR. Glu224 is a binding site for L-arginine. Arg228 contributes to the ATP binding site. Cys270 provides a ligand contact to L-arginine. ATP is bound by residues 279 to 283 and 308 to 313; these read RASVH and RGTRGE. Position 313 (Glu313) interacts with L-arginine.

The protein belongs to the ATP:guanido phosphotransferase family. As to quaternary structure, monomer.

The enzyme catalyses L-arginine + ATP = N(omega)-phospho-L-arginine + ADP + H(+). This Penaeus japonicus (Kuruma prawn) protein is Arginine kinase.